The chain runs to 156 residues: Transcription antitermination protein NusB (156 aa).

Belongs to the NusB family.

Its function is as follows. Involved in transcription antitermination. Required for transcription of ribosomal RNA (rRNA) genes. Binds specifically to the boxA antiterminator sequence of the ribosomal RNA (rrn) operons. The chain is Transcription antitermination protein NusB from Rickettsia conorii (strain ATCC VR-613 / Malish 7).